A 205-amino-acid polypeptide reads, in one-letter code: Holliday junction branch migration complex subunit RuvA (205 aa).

A domain I region spans residues methionine 1–isoleucine 64. A domain II region spans residues histidine 65–glutamine 143. The segment at glycine 144 to alanine 156 is flexible linker. The segment at methionine 157–leucine 205 is domain III.

It belongs to the RuvA family. As to quaternary structure, homotetramer. Forms an RuvA(8)-RuvB(12)-Holliday junction (HJ) complex. HJ DNA is sandwiched between 2 RuvA tetramers; dsDNA enters through RuvA and exits via RuvB. An RuvB hexamer assembles on each DNA strand where it exits the tetramer. Each RuvB hexamer is contacted by two RuvA subunits (via domain III) on 2 adjacent RuvB subunits; this complex drives branch migration. In the full resolvosome a probable DNA-RuvA(4)-RuvB(12)-RuvC(2) complex forms which resolves the HJ.

It is found in the cytoplasm. Its function is as follows. The RuvA-RuvB-RuvC complex processes Holliday junction (HJ) DNA during genetic recombination and DNA repair, while the RuvA-RuvB complex plays an important role in the rescue of blocked DNA replication forks via replication fork reversal (RFR). RuvA specifically binds to HJ cruciform DNA, conferring on it an open structure. The RuvB hexamer acts as an ATP-dependent pump, pulling dsDNA into and through the RuvAB complex. HJ branch migration allows RuvC to scan DNA until it finds its consensus sequence, where it cleaves and resolves the cruciform DNA. This Sodalis glossinidius (strain morsitans) protein is Holliday junction branch migration complex subunit RuvA.